A 200-amino-acid polypeptide reads, in one-letter code: GTP-binding protein rho5 (200 aa).

Residue 13–20 coordinates GTP; it reads GDGACGKT. An Effector region motif is present at residues 35–43; sequence YVPTVFENY. GTP is bound by residues 60–64 and 118–121; these read DTAGQ and CKVD. C197 bears the Cysteine methyl ester mark. C197 carries S-geranylgeranyl cysteine lipidation. Residues 198–200 constitute a propeptide, removed in mature form; it reads ILL.

This sequence belongs to the small GTPase superfamily. Rho family.

It is found in the cell membrane. The chain is GTP-binding protein rho5 (rho5) from Schizosaccharomyces pombe (strain 972 / ATCC 24843) (Fission yeast).